The chain runs to 1165 residues: MFELNNFDSIRIGLASPEKIREWSRGEVKKPETINYRTLKPERDGLFCERIFGPQKDWECHCGKYKRIRYKGIVCDRCGVEVTRSKVRRERMGHIELAAPVSHIWYFKGIPSRMGLLLDMSPRALEKILYFAAYVVIDPGQTPLSKKQILSEKEYRDSLEKFGPKFRAGMGAEAVRELLQEINLDELSAELREEIKQSTGQKRVRAIKRLEVVEAFRQSQNKPEWMILDVIPVIPPELRPMVQLDGGRFATSDLNDLYRRVINRNNRLKRLLDLGAPDIIVRNEKRMLQEAVDALIDNGRRGRPVTGPGNRPLKSLSDMLKGKQGRFRQNLLGKRVDYSGRSVIVVGPELKIYQCGLPKEMALELFKPFVMKKLVNDGLAHNIKSAKRMVERVRNEVWDVLEEVIKEHPVLLNRAPTLHRLGIQAFEPVLVEGRALKLHPLVCTAYNADFDGDQMAVHVPLSAEAQAEARFLMLSANNLLKPQDGKPVAVPTQDMVLGSYYLTILKEGAKGEGRVFTSMDEAVMAYDNGEIELHSKIKVRMKRVVDGVEKSKIIETTLGRLIFNEAIPQDLGFVDRSDPDKIFDLEVDFLVGKNELKKIIDKSIKVHGTTKTAILLDKIKELGFKYSTKGAITISISDMVIPEVKAKYIKETEEKIEKITKQYKRGLISDEERYNSVIAAWTEASENITRALINNLDRFNPVYMMSQSGARGNINQIKQLAGMRGLMADTSGKTIEFPIKANFREGLTVMEFFISTHGARKGLADTALRTADSGYLTRRLVDVSQDVIVRETDCGTRKGIEVTDIKDGNEVIEELSERIIGRYPVGNIVHPETGEIIVEAGRMITDQDAEKIVKAGIKKVRIRSVLTCHSEYGVCAKCYGANLATGEECNVGEAVGIIAAQSIGEPGTQLTMRTFHTGGVAGEDITQGLPRVEELFEARKPKGLAIISEIKGTVKISETKKKREIVVTSEDGETRSYLIPYGSRIKVSDGDQVEAGDELTEGSVNPHDILKIKGVEAVQTYLVHEVQKVYRMQGVDINDKHIEVIVRQMLRKVKVEDPGDTSLLPGGLVDVFDFEEENAKAIAEGKKPAVAKRALLGITKAALATDSFLSAASFQETTRVLTEAAIKGKVDPLVGLKENVIIGKLIPAGTGMSRYKDITISTVTE.

The Zn(2+) site is built by Cys60, Cys62, Cys75, and Cys78. 3 residues coordinate Mg(2+): Asp449, Asp451, and Asp453. Residues Cys794, Cys868, Cys875, and Cys878 each coordinate Zn(2+).

The protein belongs to the RNA polymerase beta' chain family. In terms of assembly, the RNAP catalytic core consists of 2 alpha, 1 beta, 1 beta' and 1 omega subunit. When a sigma factor is associated with the core the holoenzyme is formed, which can initiate transcription. Requires Mg(2+) as cofactor. Zn(2+) serves as cofactor.

It carries out the reaction RNA(n) + a ribonucleoside 5'-triphosphate = RNA(n+1) + diphosphate. Functionally, DNA-dependent RNA polymerase catalyzes the transcription of DNA into RNA using the four ribonucleoside triphosphates as substrates. This is DNA-directed RNA polymerase subunit beta' from Acetivibrio thermocellus (strain ATCC 27405 / DSM 1237 / JCM 9322 / NBRC 103400 / NCIMB 10682 / NRRL B-4536 / VPI 7372) (Clostridium thermocellum).